A 256-amino-acid polypeptide reads, in one-letter code: Acetyl-coenzyme A carboxylase carboxyl transferase subunit alpha (256 aa).

Positions 1 to 236 (MSDVARILKE…KTAIVDELAE (236 aa)) constitute a CoA carboxyltransferase C-terminal domain.

It belongs to the AccA family. In terms of assembly, acetyl-CoA carboxylase is a heterohexamer composed of biotin carboxyl carrier protein (AccB), biotin carboxylase (AccC) and two subunits each of ACCase subunit alpha (AccA) and ACCase subunit beta (AccD).

The protein localises to the cytoplasm. The catalysed reaction is N(6)-carboxybiotinyl-L-lysyl-[protein] + acetyl-CoA = N(6)-biotinyl-L-lysyl-[protein] + malonyl-CoA. It functions in the pathway lipid metabolism; malonyl-CoA biosynthesis; malonyl-CoA from acetyl-CoA: step 1/1. Its function is as follows. Component of the acetyl coenzyme A carboxylase (ACC) complex. First, biotin carboxylase catalyzes the carboxylation of biotin on its carrier protein (BCCP) and then the CO(2) group is transferred by the carboxyltransferase to acetyl-CoA to form malonyl-CoA. The polypeptide is Acetyl-coenzyme A carboxylase carboxyl transferase subunit alpha (Streptococcus thermophilus (strain ATCC BAA-491 / LMD-9)).